A 180-amino-acid polypeptide reads, in one-letter code: Large ribosomal subunit protein uL5 (180 aa).

This sequence belongs to the universal ribosomal protein uL5 family. Part of the 50S ribosomal subunit; part of the 5S rRNA/L5/L18/L25 subcomplex. Contacts the 5S rRNA and the P site tRNA. Forms a bridge to the 30S subunit in the 70S ribosome.

This is one of the proteins that bind and probably mediate the attachment of the 5S RNA into the large ribosomal subunit, where it forms part of the central protuberance. In the 70S ribosome it contacts protein S13 of the 30S subunit (bridge B1b), connecting the 2 subunits; this bridge is implicated in subunit movement. Contacts the P site tRNA; the 5S rRNA and some of its associated proteins might help stabilize positioning of ribosome-bound tRNAs. The chain is Large ribosomal subunit protein uL5 from Spiroplasma kunkelii.